Here is a 191-residue protein sequence, read N- to C-terminus: MAEPLLVVGLGNPGENYARTRHNLGFMVADLLAARLGAKFKVHKRSGAEVVTGRLAQRSVVLAKPRCYMNESGRQVAPLAKFYSVPPADLIVIHDELDLDFGRIRLKFGGGEGGHNGLRSVAAALGTKNFQRVRIGIGRPPGRKDPATFVLENFSSPERPEVPTICEQAADATELLVEVGLEPAQNRVHAW.

Tyrosine 17 contributes to the tRNA binding site. The active-site Proton acceptor is the histidine 22. TRNA is bound by residues tyrosine 68, asparagine 70, and asparagine 116.

Belongs to the PTH family. Monomer.

The protein resides in the cytoplasm. It catalyses the reaction an N-acyl-L-alpha-aminoacyl-tRNA + H2O = an N-acyl-L-amino acid + a tRNA + H(+). In terms of biological role, hydrolyzes ribosome-free peptidyl-tRNAs (with 1 or more amino acids incorporated), which drop off the ribosome during protein synthesis, or as a result of ribosome stalling. Its function is as follows. Catalyzes the release of premature peptidyl moieties from peptidyl-tRNA molecules trapped in stalled 50S ribosomal subunits, and thus maintains levels of free tRNAs and 50S ribosomes. The polypeptide is Peptidyl-tRNA hydrolase (Mycobacterium ulcerans (strain Agy99)).